We begin with the raw amino-acid sequence, 309 residues long: Protoheme IX farnesyltransferase (309 aa).

The next 9 membrane-spanning stretches (helical) occupy residues 35–55 (IGIV…AFYF), 64–84 (LHLV…SCAI), 114–134 (VLWL…MTTV), 135–155 (TAAV…TLWT), 161–181 (INTV…WTAV), 187–207 (IVPL…FLAL), 231–251 (MTKR…FYLF), 253–273 (LGVP…LLGL), and 289–309 (FVYS…ATLW).

This sequence belongs to the UbiA prenyltransferase family. Protoheme IX farnesyltransferase subfamily. As to quaternary structure, interacts with CtaA.

The protein resides in the cell membrane. It catalyses the reaction heme b + (2E,6E)-farnesyl diphosphate + H2O = Fe(II)-heme o + diphosphate. It participates in porphyrin-containing compound metabolism; heme O biosynthesis; heme O from protoheme: step 1/1. Functionally, converts heme B (protoheme IX) to heme O by substitution of the vinyl group on carbon 2 of heme B porphyrin ring with a hydroxyethyl farnesyl side group. This chain is Protoheme IX farnesyltransferase, found in Geobacillus kaustophilus (strain HTA426).